Consider the following 333-residue polypeptide: Galactinol synthase 1 (333 aa).

The active site involves Lys104. Residues Asp120, Asp122, and His257 each contribute to the Mn(2+) site.

This sequence belongs to the glycosyltransferase 8 family. Galactosyltransferase subfamily. A divalent metal cation is required as a cofactor. Expressed in source leaves, specifically in the mesophyll.

The protein resides in the cytoplasm. It carries out the reaction myo-inositol + UDP-alpha-D-galactose = alpha-D-galactosyl-(1-&gt;3)-1D-myo-inositol + UDP + H(+). Its function is as follows. Major galactinol synthase mainly involved in the biosynthesis of storage raffinose family oligosaccharides (RFOs) that function as osmoprotectants. May promote plant stress tolerance. The polypeptide is Galactinol synthase 1 (GOLS1) (Ajuga reptans (Bugle)).